The sequence spans 454 residues: GTPase Der (454 aa).

EngA-type G domains lie at 3–167 (PVIT…GIAE) and 181–354 (MKIA…AAAM). GTP is bound by residues 9 to 16 (GRPNVGKS), 56 to 60 (DTGGF), 119 to 122 (NKTE), 187 to 194 (GRPNVGKS), 234 to 238 (DTAGL), and 299 to 302 (NKWD). The 85-residue stretch at 355 to 439 (AKLPTPRLTR…PLRIQMNTAK (85 aa)) folds into the KH-like domain.

Belongs to the TRAFAC class TrmE-Era-EngA-EngB-Septin-like GTPase superfamily. EngA (Der) GTPase family. As to quaternary structure, associates with the 50S ribosomal subunit.

Its function is as follows. GTPase that plays an essential role in the late steps of ribosome biogenesis. The sequence is that of GTPase Der from Polynucleobacter asymbioticus (strain DSM 18221 / CIP 109841 / QLW-P1DMWA-1) (Polynucleobacter necessarius subsp. asymbioticus).